A 369-amino-acid polypeptide reads, in one-letter code: Quinolinate synthase (369 aa).

Residues H47 and S64 each contribute to the iminosuccinate site. C111 is a binding site for [4Fe-4S] cluster. Iminosuccinate-binding positions include 142 to 144 (YVN) and S163. Position 231 (C231) interacts with [4Fe-4S] cluster. Iminosuccinate contacts are provided by residues 257–259 (HPE) and T274. Position 321 (C321) interacts with [4Fe-4S] cluster.

It belongs to the quinolinate synthase family. Type 3 subfamily. Requires [4Fe-4S] cluster as cofactor.

Its subcellular location is the cytoplasm. It catalyses the reaction iminosuccinate + dihydroxyacetone phosphate = quinolinate + phosphate + 2 H2O + H(+). The protein operates within cofactor biosynthesis; NAD(+) biosynthesis; quinolinate from iminoaspartate: step 1/1. Functionally, catalyzes the condensation of iminoaspartate with dihydroxyacetone phosphate to form quinolinate. This chain is Quinolinate synthase, found in Bacillus licheniformis (strain ATCC 14580 / DSM 13 / JCM 2505 / CCUG 7422 / NBRC 12200 / NCIMB 9375 / NCTC 10341 / NRRL NRS-1264 / Gibson 46).